Consider the following 411-residue polypeptide: Formate-dependent phosphoribosylglycinamide formyltransferase (411 aa).

25–26 (EL) lines the N(1)-(5-phospho-beta-D-ribosyl)glycinamide pocket. Residues R118, K159, 164–169 (SSGAGQ), 199–202 (EQYI), and E207 contribute to the ATP site. Residues 123 to 318 (TFAHDKLGLP…EFDLHARAIL (196 aa)) enclose the ATP-grasp domain. Mg(2+)-binding residues include E277 and E289. Residues D296, K366, and 373 to 374 (RR) each bind N(1)-(5-phospho-beta-D-ribosyl)glycinamide.

Belongs to the PurK/PurT family. As to quaternary structure, homodimer.

It carries out the reaction N(1)-(5-phospho-beta-D-ribosyl)glycinamide + formate + ATP = N(2)-formyl-N(1)-(5-phospho-beta-D-ribosyl)glycinamide + ADP + phosphate + H(+). It functions in the pathway purine metabolism; IMP biosynthesis via de novo pathway; N(2)-formyl-N(1)-(5-phospho-D-ribosyl)glycinamide from N(1)-(5-phospho-D-ribosyl)glycinamide (formate route): step 1/1. Functionally, involved in the de novo purine biosynthesis. Catalyzes the transfer of formate to 5-phospho-ribosyl-glycinamide (GAR), producing 5-phospho-ribosyl-N-formylglycinamide (FGAR). Formate is provided by PurU via hydrolysis of 10-formyl-tetrahydrofolate. This is Formate-dependent phosphoribosylglycinamide formyltransferase from Corynebacterium jeikeium (strain K411).